Reading from the N-terminus, the 423-residue chain is Gamma-glutamyl phosphate reductase (423 aa).

Belongs to the gamma-glutamyl phosphate reductase family.

Its subcellular location is the cytoplasm. The enzyme catalyses L-glutamate 5-semialdehyde + phosphate + NADP(+) = L-glutamyl 5-phosphate + NADPH + H(+). It participates in amino-acid biosynthesis; L-proline biosynthesis; L-glutamate 5-semialdehyde from L-glutamate: step 2/2. Its function is as follows. Catalyzes the NADPH-dependent reduction of L-glutamate 5-phosphate into L-glutamate 5-semialdehyde and phosphate. The product spontaneously undergoes cyclization to form 1-pyrroline-5-carboxylate. In Burkholderia thailandensis (strain ATCC 700388 / DSM 13276 / CCUG 48851 / CIP 106301 / E264), this protein is Gamma-glutamyl phosphate reductase.